The chain runs to 372 residues: Anhydro-N-acetylmuramic acid kinase (372 aa).

Position 12–19 (12–19 (GTSMDALD)) interacts with ATP.

This sequence belongs to the anhydro-N-acetylmuramic acid kinase family.

It carries out the reaction 1,6-anhydro-N-acetyl-beta-muramate + ATP + H2O = N-acetyl-D-muramate 6-phosphate + ADP + H(+). It participates in amino-sugar metabolism; 1,6-anhydro-N-acetylmuramate degradation. Its pathway is cell wall biogenesis; peptidoglycan recycling. In terms of biological role, catalyzes the specific phosphorylation of 1,6-anhydro-N-acetylmuramic acid (anhMurNAc) with the simultaneous cleavage of the 1,6-anhydro ring, generating MurNAc-6-P. Is required for the utilization of anhMurNAc either imported from the medium or derived from its own cell wall murein, and thus plays a role in cell wall recycling. In Coxiella burnetii (strain CbuK_Q154) (Coxiella burnetii (strain Q154)), this protein is Anhydro-N-acetylmuramic acid kinase.